Reading from the N-terminus, the 169-residue chain is Der GTPase-activating protein YihI (169 aa).

2 disordered regions span residues 1-83 and 150-169; these read MNPL…PTKP and DEEE…LKGN. Residues 21–30 show a composition bias toward basic and acidic residues; sequence NREELNAEGR. Residues 31–40 are compositionally biased toward basic residues; it reads ARKREKKHRG. Basic and acidic residues-rich tracts occupy residues 51–66 and 150–161; these read SGDK…DPRL and DEEEREEEKQDD.

Belongs to the YihI family. Interacts with Der.

A GTPase-activating protein (GAP) that modifies Der/EngA GTPase function. May play a role in ribosome biogenesis. In Photorhabdus laumondii subsp. laumondii (strain DSM 15139 / CIP 105565 / TT01) (Photorhabdus luminescens subsp. laumondii), this protein is Der GTPase-activating protein YihI.